Consider the following 266-residue polypeptide: Family of serine hydrolases 3 (266 aa).

Residues Ser117, Asp180, and His209 each act as charge relay system in the active site.

It belongs to the AB hydrolase 3 family.

Its function is as follows. Serine hydrolase of unknown specificity. This is Family of serine hydrolases 3 (FSH3) from Saccharomyces cerevisiae (strain ATCC 204508 / S288c) (Baker's yeast).